Reading from the N-terminus, the 337-residue chain is GTPase Obg (337 aa).

Residues 1–158 form the Obg domain; that stretch reads MFVDRVIIEL…HHIELELKLI (158 aa). One can recognise an OBG-type G domain in the interval 159 to 330; the sequence is ADVGLVGFPN…LIEKMTQRLS (172 aa). Residues 165-172, 190-194, 212-215, 282-285, and 311-313 each bind GTP; these read GFPNAGKS, FTTLQ, DIPG, NKID, and SAV. Positions 172 and 192 each coordinate Mg(2+).

This sequence belongs to the TRAFAC class OBG-HflX-like GTPase superfamily. OBG GTPase family. In terms of assembly, monomer. Mg(2+) is required as a cofactor.

The protein localises to the cytoplasm. An essential GTPase which binds GTP, GDP and possibly (p)ppGpp with moderate affinity, with high nucleotide exchange rates and a fairly low GTP hydrolysis rate. Plays a role in control of the cell cycle, stress response, ribosome biogenesis and in those bacteria that undergo differentiation, in morphogenesis control. This chain is GTPase Obg, found in Protochlamydia amoebophila (strain UWE25).